Here is a 409-residue protein sequence, read N- to C-terminus: Elongation factor Tu, chloroplastic (409 aa).

In terms of domain architecture, tr-type G spans 10–214 (KPHVNIGTIG…AVDTYIPTPE (205 aa)). Residues 19 to 26 (GHVDHGKT) form a G1 region. A GTP-binding site is contributed by 19–26 (GHVDHGKT). T26 provides a ligand contact to Mg(2+). Residues 60–64 (GITIN) are G2. Positions 81–84 (DCPG) are G3. Residues 81–85 (DCPGH) and 136–139 (NKED) each bind GTP. The interval 136–139 (NKED) is G4. The interval 174–176 (SAL) is G5.

It belongs to the TRAFAC class translation factor GTPase superfamily. Classic translation factor GTPase family. EF-Tu/EF-1A subfamily.

It localises to the plastid. The protein resides in the chloroplast. It catalyses the reaction GTP + H2O = GDP + phosphate + H(+). In terms of biological role, GTP hydrolase that promotes the GTP-dependent binding of aminoacyl-tRNA to the A-site of ribosomes during protein biosynthesis. The sequence is that of Elongation factor Tu, chloroplastic (tufA) from Porphyra purpurea (Red seaweed).